The primary structure comprises 109 residues: Ig kappa chain V region S211 (109 aa).

The tract at residues 1–23 (DVQMTQSPSYLAASPGESVSISC) is framework-1. The segment at 24–35 (KASNKSISNNLA) is complementarity-determining-1. The tract at residues 36–50 (WYZZKPGKANKLLIS) is framework-2. A complementarity-determining-2 region spans residues 51 to 57 (SGSTLQS). The framework-3 stretch occupies residues 58-89 (GTPSRFSGSGSDTDFTLTIRSLEFQDFAVYYC). The complementarity-determining-3 stretch occupies residues 90 to 98 (ZZYNEPYYT). The interval 99–108 (FGAGTMLELK) is framework-4.

The protein is Ig kappa chain V region S211 of Rattus norvegicus (Rat).